Reading from the N-terminus, the 1303-residue chain is Alpha,alpha-trehalose-phosphate synthase [UDP-forming] 2 (1303 aa).

2 disordered regions span residues 1–48 (MTVV…NNTT) and 205–251 (LQRR…FRGK). Over residues 212–221 (SSRGGSLRGS) the composition is skewed to low complexity.

In the N-terminal section; belongs to the glycosyltransferase 20 family. The protein in the C-terminal section; belongs to the gob-1 trehalose phosphatase family.

The enzyme catalyses D-glucose 6-phosphate + UDP-alpha-D-glucose = alpha,alpha-trehalose 6-phosphate + UDP + H(+). In terms of biological role, catalyzes the production of trehalose from glucose-6-phosphate and UDP-alpha-D-glucose in a 2 step process. The protein is Alpha,alpha-trehalose-phosphate synthase [UDP-forming] 2 (tps-2) of Aphelenchoides avenae (Mycophagous nematode worm).